Consider the following 307-residue polypeptide: tRNA dimethylallyltransferase 2 (307 aa).

Residue 11–18 participates in ATP binding; it reads GPTASGKT. Residue 13–18 participates in substrate binding; sequence TASGKT. The interaction with substrate tRNA stretch occupies residues 36–39; that stretch reads DSRQ.

This sequence belongs to the IPP transferase family. In terms of assembly, monomer. It depends on Mg(2+) as a cofactor.

It carries out the reaction adenosine(37) in tRNA + dimethylallyl diphosphate = N(6)-dimethylallyladenosine(37) in tRNA + diphosphate. In terms of biological role, catalyzes the transfer of a dimethylallyl group onto the adenine at position 37 in tRNAs that read codons beginning with uridine, leading to the formation of N6-(dimethylallyl)adenosine (i(6)A). The polypeptide is tRNA dimethylallyltransferase 2 (Phocaeicola vulgatus (strain ATCC 8482 / DSM 1447 / JCM 5826 / CCUG 4940 / NBRC 14291 / NCTC 11154) (Bacteroides vulgatus)).